Here is a 198-residue protein sequence, read N- to C-terminus: Glycerol-3-phosphate acyltransferase (198 aa).

The next 5 membrane-spanning stretches (helical) occupy residues 5-25, 56-76, 84-104, 114-134, and 158-178; these read LILL…LWIG, SIVT…PFFF, FWLL…FAGF, AGVI…IFLL, and LFMG…FVVW.

Belongs to the PlsY family. Probably interacts with PlsX.

The protein resides in the cell membrane. It carries out the reaction an acyl phosphate + sn-glycerol 3-phosphate = a 1-acyl-sn-glycero-3-phosphate + phosphate. It functions in the pathway lipid metabolism; phospholipid metabolism. Catalyzes the transfer of an acyl group from acyl-phosphate (acyl-PO(4)) to glycerol-3-phosphate (G3P) to form lysophosphatidic acid (LPA). This enzyme utilizes acyl-phosphate as fatty acyl donor, but not acyl-CoA or acyl-ACP. This is Glycerol-3-phosphate acyltransferase from Listeria welshimeri serovar 6b (strain ATCC 35897 / DSM 20650 / CCUG 15529 / CIP 8149 / NCTC 11857 / SLCC 5334 / V8).